The chain runs to 319 residues: Acetyl-coenzyme A carboxylase carboxyl transferase subunit alpha (319 aa).

A CoA carboxyltransferase C-terminal domain is found at 35-296 (DLDKEIEQLE…KDMLVKQLEE (262 aa)).

It belongs to the AccA family. Acetyl-CoA carboxylase is a heterohexamer composed of biotin carboxyl carrier protein (AccB), biotin carboxylase (AccC) and two subunits each of ACCase subunit alpha (AccA) and ACCase subunit beta (AccD).

The protein localises to the cytoplasm. The enzyme catalyses N(6)-carboxybiotinyl-L-lysyl-[protein] + acetyl-CoA = N(6)-biotinyl-L-lysyl-[protein] + malonyl-CoA. It participates in lipid metabolism; malonyl-CoA biosynthesis; malonyl-CoA from acetyl-CoA: step 1/1. Its function is as follows. Component of the acetyl coenzyme A carboxylase (ACC) complex. First, biotin carboxylase catalyzes the carboxylation of biotin on its carrier protein (BCCP) and then the CO(2) group is transferred by the carboxyltransferase to acetyl-CoA to form malonyl-CoA. This Vibrio atlanticus (strain LGP32) (Vibrio splendidus (strain Mel32)) protein is Acetyl-coenzyme A carboxylase carboxyl transferase subunit alpha.